Consider the following 660-residue polypeptide: Macrolide export ATP-binding/permease protein MacB (660 aa).

The ABC transporter domain maps to 10–248 (LVLENIVRKF…AKGQALQGKQ (239 aa)). ATP is bound at residue 46-53 (GASGSGKS). 4 helical membrane-spanning segments follow: residues 285–305 (FLTM…VALG), 532–552 (ILTL…GIGV), 593–613 (IIGG…FVLF), and 625–645 (SIII…FSPA).

The protein belongs to the ABC transporter superfamily. Macrolide exporter (TC 3.A.1.122) family. As to quaternary structure, homodimer.

It is found in the cell inner membrane. Non-canonical ABC transporter that contains transmembrane domains (TMD), which form a pore in the inner membrane, and an ATP-binding domain (NBD), which is responsible for energy generation. Confers resistance against macrolides. The chain is Macrolide export ATP-binding/permease protein MacB from Bartonella quintana (strain Toulouse) (Rochalimaea quintana).